Consider the following 125-residue polypeptide: Protein ApaG (125 aa).

Positions 1–125 constitute an ApaG domain; the sequence is MIEQPRICVQ…FRLAIPALIH (125 aa).

This Yersinia pseudotuberculosis serotype IB (strain PB1/+) protein is Protein ApaG.